Here is a 462-residue protein sequence, read N- to C-terminus: Tissue alpha-L-fucosidase (462 aa).

The first 28 residues, 1 to 28, serve as a signal peptide directing secretion; the sequence is MWDLKSEWWAVGFGLLLLLAASAQAGGL. 3 N-linked (GlcNAc...) asparagine glycosylation sites follow: N237, N264, and N378.

This sequence belongs to the glycosyl hydrolase 29 family. Homotetramer.

It is found in the lysosome. The catalysed reaction is an alpha-L-fucoside + H2O = L-fucose + an alcohol. The enzyme catalyses a neolactoside IV(2)-alpha-Fuc-nLc4Cer(d18:1(4E)) + H2O = a neolactoside nLc4Cer(d18:1(4E)) + L-fucose. It carries out the reaction a neolactoside IV(2)-alpha-Fuc-nLc4Cer(d18:0) + H2O = a neolactoside nLc4Cer(d18:0) + L-fucose. Its function is as follows. Alpha-L-fucosidase is responsible for hydrolyzing the alpha-1,6-linked fucose joined to the reducing-end N-acetylglucosamine of the carbohydrate moieties of glycoproteins. This chain is Tissue alpha-L-fucosidase (Fuca1), found in Rattus norvegicus (Rat).